A 130-amino-acid chain; its full sequence is Histone H2A type 1 (130 aa).

The interval Met-1–Ala-22 is disordered. The residue at position 2 (Ser-2) is an N-acetylserine. A Phosphoserine; by RPS6KA5 modification is found at Ser-2. Position 4 is a citrulline; alternate (Arg-4). Arg-4 is subject to Symmetric dimethylarginine; by PRMT5; alternate. The residue at position 6 (Lys-6) is an N6-(2-hydroxyisobutyryl)lysine. Residues Gln-7–Ser-19 show a composition bias toward basic residues. Lys-10 is modified (N6-(2-hydroxyisobutyryl)lysine; alternate). Lys-10 is modified (N6-lactoyllysine; alternate). Lys-10 is modified (N6-succinyllysine; alternate). Glycyl lysine isopeptide (Lys-Gly) (interchain with G-Cter in ubiquitin) cross-links involve residues Lys-14 and Lys-16. The residue at position 37 (Lys-37) is an N6-(2-hydroxyisobutyryl)lysine; alternate. Lys-37 bears the N6-(beta-hydroxybutyryl)lysine; alternate mark. N6-crotonyllysine; alternate is present on Lys-37. Residues Lys-75 and Lys-76 each carry the N6-(2-hydroxyisobutyryl)lysine modification. Lys-96 is modified (N6-(2-hydroxyisobutyryl)lysine; alternate). An N6-succinyllysine; alternate modification is found at Lys-96. Position 96 is an N6-glutaryllysine; alternate (Lys-96). N6-glutaryllysine is present on Lys-100. At Gln-105 the chain carries N5-methylglutamine. Residue Lys-119 is modified to N6-(2-hydroxyisobutyryl)lysine; alternate. An N6-crotonyllysine; alternate mark is found at Lys-119 and Lys-120. Residues Lys-119 and Lys-120 each carry the N6-glutaryllysine; alternate modification. Residue Lys-120 forms a Glycyl lysine isopeptide (Lys-Gly) (interchain with G-Cter in ubiquitin); alternate linkage. Residue Thr-121 is modified to Phosphothreonine; by DCAF1. Position 126 is an N6-crotonyllysine; alternate (Lys-126). An N6-glutaryllysine; alternate modification is found at Lys-126.

This sequence belongs to the histone H2A family. In terms of assembly, the nucleosome is a histone octamer containing two molecules each of H2A, H2B, H3 and H4 assembled in one H3-H4 heterotetramer and two H2A-H2B heterodimers. The octamer wraps approximately 147 bp of DNA. Interacts with VRK1; the interaction is mediated by the nucleosome acidic patch, a cluster of negatively charged residues of H2A and H2B forming a cleft within the nucleosome core. In terms of processing, deiminated on Arg-4 in granulocytes upon calcium entry. Monoubiquitination of Lys-120 (H2AK119Ub) by RING1, TRIM37 and RNF2/RING2 complex gives a specific tag for epigenetic transcriptional repression and participates in X chromosome inactivation of female mammals. It is involved in the initiation of both imprinted and random X inactivation. Ubiquitinated H2A is enriched in inactive X chromosome chromatin. Ubiquitination of H2A functions downstream of methylation of 'Lys-27' of histone H3 (H3K27me). H2AK119Ub by RNF2/RING2 can also be induced by ultraviolet and may be involved in DNA repair. Following DNA double-strand breaks (DSBs), it is ubiquitinated through 'Lys-63' linkage of ubiquitin moieties by the E2 ligase UBE2N and the E3 ligases RNF8 and RNF168, leading to the recruitment of repair proteins to sites of DNA damage. Ubiquitination at Lys-14 and Lys-16 (H2AK13Ub and H2AK15Ub, respectively) in response to DNA damage is initiated by RNF168 that mediates monoubiquitination at these 2 sites, and 'Lys-63'-linked ubiquitin are then conjugated to monoubiquitin; RNF8 is able to extend 'Lys-63'-linked ubiquitin chains in vitro. H2AK119Ub and ionizing radiation-induced 'Lys-63'-linked ubiquitination (H2AK13Ub and H2AK15Ub) are distinct events. Post-translationally, phosphorylation on Ser-2 (H2AS1ph) is enhanced during mitosis. Phosphorylation on Ser-2 by RPS6KA5/MSK1 directly represses transcription. Acetylation of H3 inhibits Ser-2 phosphorylation by RPS6KA5/MSK1. Phosphorylation at Thr-121 (H2AT120ph) by DCAF1 is present in the regulatory region of many tumor suppresor genes and down-regulates their transcription. In terms of processing, symmetric dimethylation on Arg-4 by the PRDM1/PRMT5 complex may play a crucial role in the germ-cell lineage. Glutamine methylation at Gln-105 (H2AQ104me) by FBL is specifically dedicated to polymerase I. It is present at 35S ribosomal DNA locus and impairs binding of the FACT complex. Post-translationally, crotonylation (Kcr) is specifically present in male germ cells and marks testis-specific genes in post-meiotic cells, including X-linked genes that escape sex chromosome inactivation in haploid cells. Crotonylation marks active promoters and enhancers and confers resistance to transcriptional repressors. It is also associated with post-meiotically activated genes on autosomes. In terms of processing, lactylated in macrophages by EP300/P300 by using lactoyl-CoA directly derived from endogenous or exogenous lactate, leading to stimulates gene transcription.

Its subcellular location is the nucleus. It localises to the chromosome. Functionally, core component of nucleosome. Nucleosomes wrap and compact DNA into chromatin, limiting DNA accessibility to the cellular machineries which require DNA as a template. Histones thereby play a central role in transcription regulation, DNA repair, DNA replication and chromosomal stability. DNA accessibility is regulated via a complex set of post-translational modifications of histones, also called histone code, and nucleosome remodeling. In Bos taurus (Bovine), this protein is Histone H2A type 1.